The following is a 321-amino-acid chain: Thioredoxin reductase (321 aa).

FAD is bound at residue 36–43; that stretch reads TGMEKGGQ. C136 and C139 are oxidised to a cystine. 287–296 provides a ligand contact to FAD; sequence DVMDHIYRQA.

This sequence belongs to the class-II pyridine nucleotide-disulfide oxidoreductase family. Homodimer. It depends on FAD as a cofactor.

Its subcellular location is the cytoplasm. The catalysed reaction is [thioredoxin]-dithiol + NADP(+) = [thioredoxin]-disulfide + NADPH + H(+). The protein is Thioredoxin reductase (trxB) of Escherichia coli O157:H7.